The primary structure comprises 570 residues: Putative ABC transporter ATP-binding protein SAV2684 (570 aa).

ABC transporter domains are found at residues 6 to 247 (ISFK…GIRE) and 304 to 537 (LELN…ASLR). Residues 40–47 (GASGSGKS) and 338–345 (GHNGAGKS) each bind ATP.

The protein belongs to the ABC transporter superfamily.

The protein localises to the cell membrane. Functionally, probably part of an ABC transporter complex. Responsible for energy coupling to the transport system. The protein is Putative ABC transporter ATP-binding protein SAV2684 of Staphylococcus aureus (strain Mu50 / ATCC 700699).